The primary structure comprises 358 residues: UDP-3-O-acylglucosamine N-acyltransferase (358 aa).

The Proton acceptor role is filled by H252.

This sequence belongs to the transferase hexapeptide repeat family. LpxD subfamily. In terms of assembly, homotrimer.

The enzyme catalyses a UDP-3-O-[(3R)-3-hydroxyacyl]-alpha-D-glucosamine + a (3R)-hydroxyacyl-[ACP] = a UDP-2-N,3-O-bis[(3R)-3-hydroxyacyl]-alpha-D-glucosamine + holo-[ACP] + H(+). It participates in bacterial outer membrane biogenesis; LPS lipid A biosynthesis. Its function is as follows. Catalyzes the N-acylation of UDP-3-O-acylglucosamine using 3-hydroxyacyl-ACP as the acyl donor. Is involved in the biosynthesis of lipid A, a phosphorylated glycolipid that anchors the lipopolysaccharide to the outer membrane of the cell. This Paraburkholderia phymatum (strain DSM 17167 / CIP 108236 / LMG 21445 / STM815) (Burkholderia phymatum) protein is UDP-3-O-acylglucosamine N-acyltransferase.